A 30-amino-acid polypeptide reads, in one-letter code: Conotoxin Bt12.1 (30 aa).

Contains 3 disulfide bonds. In terms of tissue distribution, expressed by the venom duct.

The protein localises to the secreted. The chain is Conotoxin Bt12.1 from Conus betulinus (Beech cone).